The primary structure comprises 626 residues: Polypeptide N-acetylgalactosaminyltransferase 5 (626 aa).

The Cytoplasmic portion of the chain corresponds to 1-11; that stretch reads MIIFKKKAILK. Residues 12–31 form a helical; Signal-anchor for type II membrane protein membrane-spanning segment; the sequence is VLLLVPVFWICSLIFFAATS. N-linked (GlcNAc...) asparagine glycosylation occurs at asparagine 32. At 32 to 626 the chain is on the lumenal side; the sequence is NDSSQIGSNN…AIEHGAKPPS (595 aa). 5 cysteine pairs are disulfide-bonded: cysteine 165-cysteine 399, cysteine 390-cysteine 466, cysteine 502-cysteine 521, cysteine 544-cysteine 557, and cysteine 583-cysteine 598. The tract at residues 174–284 is catalytic subdomain A; the sequence is LPRTSVIICF…EGWMEPLLDR (111 aa). Aspartate 215 and arginine 245 together coordinate substrate. Residue aspartate 268 coordinates Mn(2+). Serine 269 serves as a coordination point for substrate. Histidine 270 is a Mn(2+) binding site. A glycan (N-linked (GlcNAc...) asparagine) is linked at asparagine 338. Positions 345 to 407 are catalytic subdomain B; it reads PVRSPTMAGG…PCSHVGHVFR (63 aa). Tryptophan 376 provides a ligand contact to substrate. Histidine 404 lines the Mn(2+) pocket. The substrate site is built by arginine 407 and tyrosine 412. The Ricin B-type lectin domain occupies 488-610; that stretch reads AKGEVRNSAV…DDPYQHWKFK (123 aa).

The protein belongs to the glycosyltransferase 2 family. GalNAc-T subfamily. Requires Mn(2+) as cofactor.

It is found in the golgi apparatus membrane. It carries out the reaction L-seryl-[protein] + UDP-N-acetyl-alpha-D-galactosamine = a 3-O-[N-acetyl-alpha-D-galactosaminyl]-L-seryl-[protein] + UDP + H(+). The catalysed reaction is L-threonyl-[protein] + UDP-N-acetyl-alpha-D-galactosamine = a 3-O-[N-acetyl-alpha-D-galactosaminyl]-L-threonyl-[protein] + UDP + H(+). It functions in the pathway protein modification; protein glycosylation. Functionally, catalyzes the initial reaction in O-linked oligosaccharide biosynthesis, the transfer of an N-acetyl-D-galactosamine residue to a serine or threonine residue on the protein receptor. This is Polypeptide N-acetylgalactosaminyltransferase 5 (gly-5) from Caenorhabditis elegans.